The sequence spans 860 residues: Rod cGMP-specific 3',5'-cyclic phosphodiesterase subunit alpha (860 aa).

The residue at position 2 (glycine 2) is an N-acetylglycine. 2 consecutive GAF domains span residues 73-222 and 254-431; these read QTEK…NLIM and DIER…GWSV. Residues 483 to 816 form the PDEase domain; the sequence is EEEELAEILQ…KEWKALADEY (334 aa). Histidine 559 acts as the Proton donor in catalysis. Histidine 563, histidine 599, aspartate 600, and aspartate 720 together coordinate a divalent metal cation. The segment at 821–860 is disordered; sequence KVQEEKKQKQQSAKSAAAGNQPGGNPSPGGATTSKSCCIQ. Positions 830–851 are enriched in low complexity; it reads QQSAKSAAAGNQPGGNPSPGGA. Cysteine 857 bears the Cysteine methyl ester mark. Cysteine 857 carries the S-farnesyl cysteine lipid modification. Positions 858-860 are cleaved as a propeptide — removed in mature form; the sequence is CIQ.

This sequence belongs to the cyclic nucleotide phosphodiesterase family. In terms of assembly, oligomer composed of two catalytic chains (alpha and beta), an inhibitory chain (gamma) and the delta chain. The cofactor is a divalent metal cation.

It is found in the cell membrane. Its subcellular location is the cell projection. The protein resides in the cilium. The protein localises to the photoreceptor outer segment. The catalysed reaction is 3',5'-cyclic GMP + H2O = GMP + H(+). Rod-specific cGMP phosphodiesterase that catalyzes the hydrolysis of 3',5'-cyclic GMP. This protein participates in processes of transmission and amplification of the visual signal. The polypeptide is Rod cGMP-specific 3',5'-cyclic phosphodiesterase subunit alpha (Homo sapiens (Human)).